Reading from the N-terminus, the 271-residue chain is Formamidopyrimidine-DNA glycosylase (271 aa).

Residue proline 2 is the Schiff-base intermediate with DNA of the active site. The active-site Proton donor is glutamate 3. Lysine 57 functions as the Proton donor; for beta-elimination activity in the catalytic mechanism. DNA is bound by residues histidine 90, arginine 109, and lysine 151. The FPG-type zinc-finger motif lies at 236–270 (HVYGRGGETCTQCGHLLSEIKLGQRATVFCSLCQK). Arginine 260 (proton donor; for delta-elimination activity) is an active-site residue.

The protein belongs to the FPG family. In terms of assembly, monomer. The cofactor is Zn(2+).

The enzyme catalyses Hydrolysis of DNA containing ring-opened 7-methylguanine residues, releasing 2,6-diamino-4-hydroxy-5-(N-methyl)formamidopyrimidine.. It catalyses the reaction 2'-deoxyribonucleotide-(2'-deoxyribose 5'-phosphate)-2'-deoxyribonucleotide-DNA = a 3'-end 2'-deoxyribonucleotide-(2,3-dehydro-2,3-deoxyribose 5'-phosphate)-DNA + a 5'-end 5'-phospho-2'-deoxyribonucleoside-DNA + H(+). In terms of biological role, involved in base excision repair of DNA damaged by oxidation or by mutagenic agents. Acts as a DNA glycosylase that recognizes and removes damaged bases. Has a preference for oxidized purines, such as 7,8-dihydro-8-oxoguanine (8-oxoG). Has AP (apurinic/apyrimidinic) lyase activity and introduces nicks in the DNA strand. Cleaves the DNA backbone by beta-delta elimination to generate a single-strand break at the site of the removed base with both 3'- and 5'-phosphates. In Shewanella halifaxensis (strain HAW-EB4), this protein is Formamidopyrimidine-DNA glycosylase.